The chain runs to 107 residues: uncharacterized protein (107 aa).

The region spanning 13 to 68 (LQEEFLEPLSLKISDLAQILDVHRNTASNIVNNSSRITLEMAVKLAKVFDTTPEFW) is the HTH cro/C1-type domain. The H-T-H motif DNA-binding region spans 24–43 (KISDLAQILDVHRNTASNIV).

The protein belongs to the VapA/VapI family.

This is an uncharacterized protein from Haemophilus influenzae (strain ATCC 51907 / DSM 11121 / KW20 / Rd).